Here is a 312-residue protein sequence, read N- to C-terminus: Glycine--tRNA ligase alpha subunit (312 aa).

This sequence belongs to the class-II aminoacyl-tRNA synthetase family. In terms of assembly, tetramer of two alpha and two beta subunits.

The protein resides in the cytoplasm. The catalysed reaction is tRNA(Gly) + glycine + ATP = glycyl-tRNA(Gly) + AMP + diphosphate. In Thiobacillus denitrificans (strain ATCC 25259 / T1), this protein is Glycine--tRNA ligase alpha subunit.